A 573-amino-acid chain; its full sequence is Proline--tRNA ligase (573 aa).

It belongs to the class-II aminoacyl-tRNA synthetase family. ProS type 1 subfamily. As to quaternary structure, homodimer.

Its subcellular location is the cytoplasm. It catalyses the reaction tRNA(Pro) + L-proline + ATP = L-prolyl-tRNA(Pro) + AMP + diphosphate. In terms of biological role, catalyzes the attachment of proline to tRNA(Pro) in a two-step reaction: proline is first activated by ATP to form Pro-AMP and then transferred to the acceptor end of tRNA(Pro). As ProRS can inadvertently accommodate and process non-cognate amino acids such as alanine and cysteine, to avoid such errors it has two additional distinct editing activities against alanine. One activity is designated as 'pretransfer' editing and involves the tRNA(Pro)-independent hydrolysis of activated Ala-AMP. The other activity is designated 'posttransfer' editing and involves deacylation of mischarged Ala-tRNA(Pro). The misacylated Cys-tRNA(Pro) is not edited by ProRS. This chain is Proline--tRNA ligase, found in Citrifermentans bemidjiense (strain ATCC BAA-1014 / DSM 16622 / JCM 12645 / Bem) (Geobacter bemidjiensis).